The primary structure comprises 162 residues: UPF0114 protein PFLU_5318 (162 aa).

A run of 3 helical transmembrane segments spans residues 15 to 35 (LLAP…LKFF), 53 to 73 (LILV…LVMV), and 136 to 156 (LMWY…MGYL).

This sequence belongs to the UPF0114 family.

It localises to the cell membrane. The polypeptide is UPF0114 protein PFLU_5318 (Pseudomonas fluorescens (strain SBW25)).